The primary structure comprises 422 residues: Tyrosine--tRNA ligase (422 aa).

Position 37 (Y37) interacts with L-tyrosine. The 'HIGH' region signature appears at P42–H51. L-tyrosine is bound by residues Y175 and Q179. Residues K235–T239 carry the 'KMSKS' region motif. K238 provides a ligand contact to ATP. The S4 RNA-binding domain occupies K357–K414.

This sequence belongs to the class-I aminoacyl-tRNA synthetase family. TyrS type 1 subfamily. As to quaternary structure, homodimer.

Its subcellular location is the cytoplasm. The enzyme catalyses tRNA(Tyr) + L-tyrosine + ATP = L-tyrosyl-tRNA(Tyr) + AMP + diphosphate + H(+). Its function is as follows. Catalyzes the attachment of tyrosine to tRNA(Tyr) in a two-step reaction: tyrosine is first activated by ATP to form Tyr-AMP and then transferred to the acceptor end of tRNA(Tyr). The polypeptide is Tyrosine--tRNA ligase (Buchnera aphidicola subsp. Acyrthosiphon pisum (strain 5A)).